We begin with the raw amino-acid sequence, 340 residues long: Anthranilate phosphoribosyltransferase (340 aa).

Residues G83, G86–D87, T91, N93–T96, K111–S119, and S123 each bind 5-phospho-alpha-D-ribose 1-diphosphate. An anthranilate-binding site is contributed by G83. Residue S95 participates in Mg(2+) binding. N114 is a binding site for anthranilate. Anthranilate is bound at residue R169. Positions 228 and 229 each coordinate Mg(2+).

Belongs to the anthranilate phosphoribosyltransferase family. As to quaternary structure, homodimer. Mg(2+) serves as cofactor.

The catalysed reaction is N-(5-phospho-beta-D-ribosyl)anthranilate + diphosphate = 5-phospho-alpha-D-ribose 1-diphosphate + anthranilate. It participates in amino-acid biosynthesis; L-tryptophan biosynthesis; L-tryptophan from chorismate: step 2/5. Its function is as follows. Catalyzes the transfer of the phosphoribosyl group of 5-phosphorylribose-1-pyrophosphate (PRPP) to anthranilate to yield N-(5'-phosphoribosyl)-anthranilate (PRA). This chain is Anthranilate phosphoribosyltransferase, found in Aquifex aeolicus (strain VF5).